The following is a 447-amino-acid chain: Alkylglycerol monooxygenase (447 aa).

2 helical membrane-spanning segments follow: residues 43–63 and 111–131; these read ATPF…ILKG and WDST…YYWF. The Fatty acid hydroxylase domain maps to 119–249; sequence FTFLGVDFGY…LIIWDRIFGT (131 aa). The Histidine box-1 signature appears at 132-136; the sequence is HRMAH. The Histidine box-2 motif lies at 145–149; that stretch reads HQAHH. A helical membrane pass occupies residues 170–190; sequence SWVFYCPLALFIPPSVFAVHI. The Histidine box-3 signature appears at 221 to 225; sequence HRVHH. A run of 3 helical transmembrane segments spans residues 340-360, 363-383, and 413-433; these read VLQF…TAVL, VTLL…GFLL, and IPSL…FWGV.

The protein belongs to the sterol desaturase family. TMEM195 subfamily. Fe cation serves as cofactor. In terms of tissue distribution, highly expressed in lever and small intestine.

It is found in the endoplasmic reticulum membrane. The enzyme catalyses 1-O-(1,2-saturated-alkyl)-sn-glycerol + (6R)-L-erythro-5,6,7,8-tetrahydrobiopterin + O2 = a 1-(1-hydroxyalkyl)-sn-glycerol + (6R)-L-erythro-6,7-dihydrobiopterin + H2O. Its function is as follows. Glyceryl-ether monooxygenase that cleaves the O-alkyl bond of ether lipids. Ether lipids are essential components of brain membranes. The chain is Alkylglycerol monooxygenase (Agmo) from Mus musculus (Mouse).